The sequence spans 312 residues: Malate dehydrogenase (312 aa).

NAD(+)-binding positions include 10–15 and D34; that span reads GAGNTG. Residues R85 and R91 each contribute to the substrate site. NAD(+) is bound by residues N98 and 121-123; that span reads LTN. The substrate site is built by N123 and R154. The Proton acceptor role is filled by H178.

The protein belongs to the LDH/MDH superfamily. MDH type 3 family.

It catalyses the reaction (S)-malate + NAD(+) = oxaloacetate + NADH + H(+). In terms of biological role, catalyzes the reversible oxidation of malate to oxaloacetate. In Staphylococcus saprophyticus subsp. saprophyticus (strain ATCC 15305 / DSM 20229 / NCIMB 8711 / NCTC 7292 / S-41), this protein is Malate dehydrogenase.